Consider the following 332-residue polypeptide: Serpentine receptor class gamma-3 (332 aa).

7 consecutive transmembrane segments (helical) span residues 23-43 (FAYL…IWVS), 72-92 (LIFT…SEIV), 101-121 (IYYC…IFIA), 144-164 (IMLI…LISD), 184-204 (WASL…ITMV), 231-251 (AALI…FAFF), and 263-283 (YLRF…LLLV).

Belongs to the nematode receptor-like protein srg family.

The protein resides in the membrane. This is Serpentine receptor class gamma-3 (srg-3) from Caenorhabditis elegans.